Reading from the N-terminus, the 436-residue chain is Gamma-glutamyl phosphate reductase (436 aa).

It belongs to the gamma-glutamyl phosphate reductase family.

It is found in the cytoplasm. The enzyme catalyses L-glutamate 5-semialdehyde + phosphate + NADP(+) = L-glutamyl 5-phosphate + NADPH + H(+). Its pathway is amino-acid biosynthesis; L-proline biosynthesis; L-glutamate 5-semialdehyde from L-glutamate: step 2/2. Its function is as follows. Catalyzes the NADPH-dependent reduction of L-glutamate 5-phosphate into L-glutamate 5-semialdehyde and phosphate. The product spontaneously undergoes cyclization to form 1-pyrroline-5-carboxylate. This is Gamma-glutamyl phosphate reductase from Prochlorococcus marinus (strain MIT 9301).